We begin with the raw amino-acid sequence, 1649 residues long: Formin-like protein 20 (1649 aa).

The Phosphatase tensin-type domain occupies 1 to 194; it reads MALFRRFFYK…QYISRRNLGS (194 aa). The active-site Phosphocysteine intermediate is cysteine 127. The 140-residue stretch at 200-339 folds into the C2 tensin-type domain; sequence DTPLLLDCLI…FKAEVLFSGA (140 aa). Disordered stretches follow at residues 416–774 and 787–1245; these read DCAS…PWKS and STSQ…QKKS. Residues 421–483 are compositionally biased toward basic and acidic residues; the sequence is DSNHKHDMHA…RRTVEAKEND (63 aa). Polar residues-rich tracts occupy residues 500 to 513 and 585 to 597; these read LESM…SLNK and RINS…TTSL. The span at 598-616 shows a compositional bias: basic and acidic residues; that stretch reads KDGKRATSPDGVIPKDAKT. A compositionally biased stretch (pro residues) spans 648–662; that stretch reads SLPPASPHQAPPPLP. The span at 665-678 shows a compositional bias: polar residues; it reads TSEAKTVLHSSQAV. 5 stretches are compositionally biased toward pro residues: residues 680-691, 701-711, 722-732, 743-752, and 795-804; these read SPPPPPPPPPLP, LPPPPPPPPPF, LPPPPPPPLP, and SPTPPPPPPA. A compositionally biased stretch (polar residues) spans 809–820; that stretch reads GQKSSDLQTSQL. 3 stretches are compositionally biased toward pro residues: residues 821 to 832, 843 to 854, and 865 to 874; these read PSPPPPPPPPPF, LPPPPPPPPPPF, and LPPPPPPPPW. Polar residues predominate over residues 878 to 890; it reads YASTFETHEACST. Composition is skewed to pro residues over residues 893-904, 944-960, and 968-1213; these read SPPPPPPPPPFS, PSPP…PPPF, and SPPP…PPPM. An FH2 domain is found at 1237–1635; sequence FGSAAQKKSS…KALKEAEMEK (399 aa).

This sequence belongs to the formin-like family. Class-II subfamily.

This chain is Formin-like protein 20 (FH20), found in Arabidopsis thaliana (Mouse-ear cress).